We begin with the raw amino-acid sequence, 423 residues long: Sorting nexin-4 (423 aa).

The span at 1-21 (MTDKGKNDLTSKAKDKARGNP) shows a compositional bias: basic and acidic residues. A disordered region spans residues 1 to 25 (MTDKGKNDLTSKAKDKARGNPEKPP). Positions 29–157 (EIIVSDPQKR…TFLVSKDWES (129 aa)) constitute a PX domain. Positions 78, 80, 104, and 123 each coordinate a 1,2-diacyl-sn-glycero-3-phospho-(1D-myo-inositol-3-phosphate). Coiled-coil stretches lie at residues 217–252 (KKND…AKLK) and 346–381 (SRRE…ECLK).

The protein belongs to the sorting nexin family. Forms a complex with ATG20 and ATG17. Binds also to SNC1 and SNX41.

It is found in the cytoplasm. The protein localises to the cytosol. The protein resides in the preautophagosomal structure membrane. Its subcellular location is the endosome membrane. Functionally, sorting nexin, involved in the separation or division of vacuoles throughout the entire life cycle of the cells. Involved in retrieval of late-Golgi SNAREs from post-Golgi endosomes to the trans-Golgi network, for cytoplasm to vacuole transport (Cvt), and autophagy of large cargos including mitophagy, pexophagy and glycophagy. Involved in proper sorting of the v-SNARE protein SNC1. The polypeptide is Sorting nexin-4 (Saccharomyces cerevisiae (strain ATCC 204508 / S288c) (Baker's yeast)).